A 270-amino-acid polypeptide reads, in one-letter code: Proteasome subunit alpha type-1 (270 aa).

The segment at 239–270 (SMEAAEEAPAAEAESSSMQEEDKGTDAAPMDI) is disordered. The segment covering 245–256 (EAPAAEAESSSM) has biased composition (low complexity).

Belongs to the peptidase T1A family. The 26S proteasome consists of a 20S proteasome core and two 19S regulatory subunits. The 20S proteasome core is composed of 28 subunits that are arranged in four stacked rings, resulting in a barrel-shaped structure. The two end rings are each formed by seven alpha subunits, and the two central rings are each formed by seven beta subunits. The catalytic chamber with the active sites is on the inside of the barrel.

Its subcellular location is the cytoplasm. The protein localises to the nucleus. Functionally, the proteasome is a multicatalytic proteinase complex which is characterized by its ability to cleave peptides with Arg, Phe, Tyr, Leu, and Glu adjacent to the leaving group at neutral or slightly basic pH. The proteasome has an ATP-dependent proteolytic activity. The chain is Proteasome subunit alpha type-1 (PAF1) from Oryza sativa subsp. japonica (Rice).